We begin with the raw amino-acid sequence, 223 residues long: MIF4G domain-containing protein A (223 aa).

The MIF4G domain occupies 7-206 (QEDYKMQAFD…LEMIEYRAAG (200 aa)).

The protein belongs to the MIF4GD family. As to quaternary structure, interacts with eif4g1, eif4g2 and slbp; probably tethered by SLBP to the 3'-end of mRNAs ending with the histone stem-loop, it also interacts with eif4g1 which is bound to their 5'-end.

It localises to the cytoplasm. It is found in the nucleus. Its function is as follows. Functions in replication-dependent translation of histone mRNAs which differ from other eukaryotic mRNAs in that they do not end with a poly-A tail but a stem-loop. May participate in circularizing those mRNAs specifically enhancing their translation. The sequence is that of MIF4G domain-containing protein A (mif4gd-a) from Xenopus laevis (African clawed frog).